Consider the following 150-residue polypeptide: Putative STAG3-like protein 4 (150 aa).

It belongs to the SCC3 family.

This chain is Putative STAG3-like protein 4 (STAG3L4), found in Homo sapiens (Human).